Consider the following 477-residue polypeptide: RTX-I toxin determinant D (477 aa).

At 1–59 (MKTWLMGLYEFFQAYKTVWTEIWKIRHQLDTPDREKDENEFLPAHLELIETPVSKKPRL) the chain is on the cytoplasmic side. A helical membrane pass occupies residues 60-80 (IAYLIMLFLFLALVISIVSHV). At 81–477 (EIVATATGKL…ESVSESLRER (397 aa)) the chain is on the periplasmic side.

This sequence belongs to the membrane fusion protein (MFP) (TC 8.A.1) family.

The protein localises to the cell inner membrane. Its function is as follows. Involved in the transport of the toxin RTX-I as well as that of RTX-II. This is RTX-I toxin determinant D (apxID) from Actinobacillus pleuropneumoniae (Haemophilus pleuropneumoniae).